We begin with the raw amino-acid sequence, 367 residues long: Tetraacyldisaccharide 4'-kinase (367 aa).

Position 68–75 (68–75 (VLGGSGKT)) interacts with ATP.

Belongs to the LpxK family.

The catalysed reaction is a lipid A disaccharide + ATP = a lipid IVA + ADP + H(+). The protein operates within glycolipid biosynthesis; lipid IV(A) biosynthesis; lipid IV(A) from (3R)-3-hydroxytetradecanoyl-[acyl-carrier-protein] and UDP-N-acetyl-alpha-D-glucosamine: step 6/6. Its function is as follows. Transfers the gamma-phosphate of ATP to the 4'-position of a tetraacyldisaccharide 1-phosphate intermediate (termed DS-1-P) to form tetraacyldisaccharide 1,4'-bis-phosphate (lipid IVA). This chain is Tetraacyldisaccharide 4'-kinase, found in Chlamydia caviae (strain ATCC VR-813 / DSM 19441 / 03DC25 / GPIC) (Chlamydophila caviae).